Here is a 132-residue protein sequence, read N- to C-terminus: Transmembrane protein 170B (132 aa).

Residues 1-37 (MRAEGADHSMINLSVQQVLSLWAHGTVLRNLTEMWYW) are Extracellular-facing. Asparagine 12 is a glycosylation site (N-linked (GlcNAc...) asparagine). The helical transmembrane segment at 38–58 (IFLWALFSSLFVHGAAGVLMF) threads the bilayer. The Cytoplasmic portion of the chain corresponds to 59–68 (VMLQRHRQGR). A helical transmembrane segment spans residues 69 to 89 (VLSIIAVSIGFLASVTGAMIT). The Extracellular portion of the chain corresponds to 90-104 (SAAVAGIYRVAGKNM). A helical membrane pass occupies residues 105–125 (APLEALVWGVGQTVLTLIISF). Over 126–132 (SRILATL) the chain is Cytoplasmic.

The protein belongs to the TMEM170 family. In terms of assembly, interacts with CTNNB1.

The protein resides in the cell membrane. The polypeptide is Transmembrane protein 170B (Tmem170b) (Rattus norvegicus (Rat)).